We begin with the raw amino-acid sequence, 122 residues long: Histone H2B.1 (122 aa).

Positions 1–10 (MAPKKAPAAA) are enriched in low complexity. The tract at residues 1–28 (MAPKKAPAAAAEKKVKKAPTTEKKNKKK) is disordered. A N,N,N-trimethylalanine modification is found at A2. N6-acetyllysine is present on residues K5 and K42. A Glycyl lysine isopeptide (Lys-Gly) (interchain with G-Cter in ubiquitin) cross-link involves residue K116.

This sequence belongs to the histone H2B family. As to quaternary structure, the nucleosome is a histone octamer containing two molecules each of H2A, H2B, H3 and H4 assembled in one H3-H4 heterotetramer and two H2A-H2B heterodimers. The octamer wraps approximately 147 bp of DNA. Post-translationally, acetylation occurs almost exclusively in the MAC. In terms of processing, monoubiquitination to form H2BK115ub1 gives a specific tag for epigenetic transcriptional activation and is also prerequisite for H3K4me and H3K79me formation.

It is found in the nucleus. It localises to the chromosome. Core component of nucleosome. Nucleosomes wrap and compact DNA into chromatin, limiting DNA accessibility to the cellular machineries which require DNA as a template. Histones thereby play a central role in transcription regulation, DNA repair, DNA replication and chromosomal stability. DNA accessibility is regulated via a complex set of post-translational modifications of histones, also called histone code, and nucleosome remodeling. The sequence is that of Histone H2B.1 (HTB1) from Tetrahymena thermophila (strain SB210).